The following is a 201-amino-acid chain: ADP-ribosylation factor-related protein 1 (201 aa).

Met1 carries the N-acetylmethionine modification. GTP contacts are provided by residues 24 to 31 (GLDNAGKT), 75 to 79 (DLGGQ), and 134 to 137 (NKQD).

It belongs to the small GTPase superfamily. Arf family. In terms of assembly, interacts with SYS1.

It is found in the golgi apparatus. It localises to the trans-Golgi network. Trans-Golgi-associated GTPase that regulates protein sorting. Controls the targeting of ARL1 and its effector to the trans-Golgi. Required for the lipidation of chylomicrons in the intestine and required for VLDL lipidation in the liver. The polypeptide is ADP-ribosylation factor-related protein 1 (ARFRP1) (Pongo abelii (Sumatran orangutan)).